Consider the following 1501-residue polypeptide: RE1-silencing transcription factor A (1501 aa).

The C2H2-type 1 zinc-finger motif lies at 158 to 180 (FRCKPCQYKAESEEEFVHHIKIH). Over residues 186 to 200 (VDNDSKKNPQGKEAD) the composition is skewed to basic and acidic residues. The segment at 186-209 (VDNDSKKNPQGKEADSSIPEESDI) is disordered. 7 consecutive C2H2-type zinc fingers follow at residues 214–236 (IQCDGCGYNTNRFDHYLAHLKHH), 246–268 (YKCTICTYSTVSEYHWKKHLRNH), 274–296 (YTCSQCSYFSDRKNNYIQHIRTH), 302–324 (YQCIICLYSSSQKTHLTRHMRTH), 330–353 (FKCEQCSYVASNQHEVTRHARQVH), 359–381 (LTCPHCDYKTADRSNFKKHVELH), and 387–410 (FLCPVCDYAASKKCNLQYHIKSRH). Disordered stretches follow at residues 491 to 514 (SSTQKKIKASEVRPEKIVDKSRKS), 569 to 612 (SFVK…SVAS), 885 to 929 (PTKV…VPGD), and 1040 to 1079 (VAAGDEPTSVQPLSREDPKSVQPIGEDQPTSVQPPGGDEQ). Basic and acidic residues-rich tracts occupy residues 498 to 512 (KASEVRPEKIVDKSR) and 594 to 605 (ITEKKEKGKQLD). Over residues 1067 to 1079 (QPTSVQPPGGDEQ) the composition is skewed to polar residues. The C2H2-type 9 zinc finger occupies 1463–1485 (FVCIFCDRTFRKEEEYTKHLRRH).

The protein localises to the nucleus. It localises to the cytoplasm. In terms of biological role, transcriptional repressor which binds neuron-restrictive silencer element (NRSE) and represses neuronal gene transcription in non-neuronal cells. Plays a role in the early development of the nervous system and is required for proper patterning of the neuroectoderm during gastrulation. This involves the correct speciation of the neuroepithelial domain and adequate development of the non-neural ectoderm. This is RE1-silencing transcription factor A (rest-a) from Xenopus laevis (African clawed frog).